Consider the following 363-residue polypeptide: 5-hydroxytryptamine receptor 1E (363 aa).

Over 1–21 the chain is Extracellular; sequence MNITNCTTEASMAIRPKTITE. Residues Asn-2 and Asn-5 are each glycosylated (N-linked (GlcNAc...) asparagine). The helical transmembrane segment at 22–45 threads the bilayer; it reads KMLICMTLVVITTLTTLLNLAVIM. The Cytoplasmic portion of the chain corresponds to 46–59; the sequence is AIGTTKKLHQPANY. A helical transmembrane segment spans residues 60–84; sequence LICSLAVTDLLVAVLVMPLSIIYIV. Residues 85 to 92 are Extracellular-facing; the sequence is MDRWKLGY. The chain crosses the membrane as a helical span at residues 93–118; the sequence is FLCEVWLSVDMTCCTCSILHLCVIAL. Cys-95 and Cys-173 are disulfide-bonded. Serotonin contacts are provided by Asp-102 and Cys-106. Residues 119–121 carry the DRY motif; important for ligand-induced conformation changes motif; it reads DRY. Residues 119–138 lie on the Cytoplasmic side of the membrane; it reads DRYWAITNAIEYARKRTAKR. Residues 139–157 form a helical membrane-spanning segment; that stretch reads AALMILTVWTISIFISMPP. Residues 158–179 are Extracellular-facing; the sequence is LFWRSHRRLSPPPSQCTIQHDH. The chain crosses the membrane as a helical span at residues 180–203; sequence VIYTIYSTLGAFYIPLTLILILYY. Residues 204–291 lie on the Cytoplasmic side of the membrane; the sequence is RIYHAAKSLY…SSTRERKAAR (88 aa). The helical transmembrane segment at 292-316 threads the bilayer; that stretch reads ILGLILGAFILSWLPFFIKELIVGL. Residues 317–322 lie on the Extracellular side of the membrane; that stretch reads SIYTVS. A helical transmembrane segment spans residues 323–345; it reads SEVADFLTWLGYVNSLINPLLYT. An NPxxY motif; important for ligand-induced conformation changes and signaling motif is present at residues 340–344; the sequence is NPLLY. The Cytoplasmic portion of the chain corresponds to 346–363; that stretch reads SFNEDFKLAFKKLIRCRE.

It belongs to the G-protein coupled receptor 1 family.

Its subcellular location is the cell membrane. G-protein coupled receptor for 5-hydroxytryptamine (serotonin). Also functions as a receptor for various alkaloids and psychoactive substances. Ligand binding causes a conformation change that triggers signaling via guanine nucleotide-binding proteins (G proteins) and modulates the activity of downstream effectors, such as adenylate cyclase. HTR1E is coupled to G(i)/G(o) G alpha proteins and mediates inhibitory neurotransmission by inhibiting adenylate cyclase activity. In Pan troglodytes (Chimpanzee), this protein is 5-hydroxytryptamine receptor 1E (HTR1E).